The chain runs to 438 residues: Thymidine phosphorylase (438 aa).

Belongs to the thymidine/pyrimidine-nucleoside phosphorylase family. In terms of assembly, homodimer.

The catalysed reaction is thymidine + phosphate = 2-deoxy-alpha-D-ribose 1-phosphate + thymine. It functions in the pathway pyrimidine metabolism; dTMP biosynthesis via salvage pathway; dTMP from thymine: step 1/2. In terms of biological role, the enzymes which catalyze the reversible phosphorolysis of pyrimidine nucleosides are involved in the degradation of these compounds and in their utilization as carbon and energy sources, or in the rescue of pyrimidine bases for nucleotide synthesis. This is Thymidine phosphorylase from Burkholderia orbicola (strain MC0-3).